Reading from the N-terminus, the 487-residue chain is Aspartyl/glutamyl-tRNA(Asn/Gln) amidotransferase subunit B (487 aa).

The protein belongs to the GatB/GatE family. GatB subfamily. As to quaternary structure, heterotrimer of A, B and C subunits.

It carries out the reaction L-glutamyl-tRNA(Gln) + L-glutamine + ATP + H2O = L-glutaminyl-tRNA(Gln) + L-glutamate + ADP + phosphate + H(+). The catalysed reaction is L-aspartyl-tRNA(Asn) + L-glutamine + ATP + H2O = L-asparaginyl-tRNA(Asn) + L-glutamate + ADP + phosphate + 2 H(+). Allows the formation of correctly charged Asn-tRNA(Asn) or Gln-tRNA(Gln) through the transamidation of misacylated Asp-tRNA(Asn) or Glu-tRNA(Gln) in organisms which lack either or both of asparaginyl-tRNA or glutaminyl-tRNA synthetases. The reaction takes place in the presence of glutamine and ATP through an activated phospho-Asp-tRNA(Asn) or phospho-Glu-tRNA(Gln). This Roseiflexus sp. (strain RS-1) protein is Aspartyl/glutamyl-tRNA(Asn/Gln) amidotransferase subunit B.